The following is a 397-amino-acid chain: Tryptophan synthase beta chain 1 (397 aa).

Lys-90 bears the N6-(pyridoxal phosphate)lysine mark.

The protein belongs to the TrpB family. Tetramer of two alpha and two beta chains. The cofactor is pyridoxal 5'-phosphate.

The enzyme catalyses (1S,2R)-1-C-(indol-3-yl)glycerol 3-phosphate + L-serine = D-glyceraldehyde 3-phosphate + L-tryptophan + H2O. The protein operates within amino-acid biosynthesis; L-tryptophan biosynthesis; L-tryptophan from chorismate: step 5/5. In terms of biological role, the beta subunit is responsible for the synthesis of L-tryptophan from indole and L-serine. This Aquifex aeolicus (strain VF5) protein is Tryptophan synthase beta chain 1 (trpB1).